The chain runs to 525 residues: GMP synthase [glutamine-hydrolyzing] (525 aa).

The Glutamine amidotransferase type-1 domain maps to 9–207 (RILILDFGSQ…ILDICGCEAL (199 aa)). The Nucleophile role is filled by cysteine 86. Residues histidine 181 and glutamate 183 contribute to the active site. The GMPS ATP-PPase domain occupies 208–400 (WTPSKIAEDA…LGLPYDMVYR (193 aa)). 235–241 (SGGVDSS) is an ATP binding site.

As to quaternary structure, homodimer.

It carries out the reaction XMP + L-glutamine + ATP + H2O = GMP + L-glutamate + AMP + diphosphate + 2 H(+). The protein operates within purine metabolism; GMP biosynthesis; GMP from XMP (L-Gln route): step 1/1. Its function is as follows. Catalyzes the synthesis of GMP from XMP. The chain is GMP synthase [glutamine-hydrolyzing] from Pseudomonas fluorescens (strain ATCC BAA-477 / NRRL B-23932 / Pf-5).